We begin with the raw amino-acid sequence, 241 residues long: Pyridoxine 5'-phosphate synthase (241 aa).

Residue asparagine 7 coordinates 3-amino-2-oxopropyl phosphate. 9–10 (DH) serves as a coordination point for 1-deoxy-D-xylulose 5-phosphate. Arginine 18 lines the 3-amino-2-oxopropyl phosphate pocket. Histidine 43 acts as the Proton acceptor in catalysis. Arginine 45 and histidine 50 together coordinate 1-deoxy-D-xylulose 5-phosphate. Catalysis depends on glutamate 70, which acts as the Proton acceptor. Threonine 100 contacts 1-deoxy-D-xylulose 5-phosphate. Histidine 191 functions as the Proton donor in the catalytic mechanism. 3-amino-2-oxopropyl phosphate contacts are provided by residues glycine 192 and 213–214 (GH).

It belongs to the PNP synthase family. In terms of assembly, homooctamer; tetramer of dimers.

It localises to the cytoplasm. It catalyses the reaction 3-amino-2-oxopropyl phosphate + 1-deoxy-D-xylulose 5-phosphate = pyridoxine 5'-phosphate + phosphate + 2 H2O + H(+). It functions in the pathway cofactor biosynthesis; pyridoxine 5'-phosphate biosynthesis; pyridoxine 5'-phosphate from D-erythrose 4-phosphate: step 5/5. In terms of biological role, catalyzes the complicated ring closure reaction between the two acyclic compounds 1-deoxy-D-xylulose-5-phosphate (DXP) and 3-amino-2-oxopropyl phosphate (1-amino-acetone-3-phosphate or AAP) to form pyridoxine 5'-phosphate (PNP) and inorganic phosphate. The protein is Pyridoxine 5'-phosphate synthase of Maridesulfovibrio salexigens (strain ATCC 14822 / DSM 2638 / NCIMB 8403 / VKM B-1763) (Desulfovibrio salexigens).